Consider the following 79-residue polypeptide: Small ribosomal subunit protein bS18 (79 aa).

The protein belongs to the bacterial ribosomal protein bS18 family. As to quaternary structure, part of the 30S ribosomal subunit. Forms a tight heterodimer with protein bS6.

Functionally, binds as a heterodimer with protein bS6 to the central domain of the 16S rRNA, where it helps stabilize the platform of the 30S subunit. The protein is Small ribosomal subunit protein bS18 of Micrococcus luteus (strain ATCC 4698 / DSM 20030 / JCM 1464 / CCM 169 / CCUG 5858 / IAM 1056 / NBRC 3333 / NCIMB 9278 / NCTC 2665 / VKM Ac-2230) (Micrococcus lysodeikticus).